Reading from the N-terminus, the 301-residue chain is Glycine--tRNA ligase alpha subunit (301 aa).

Belongs to the class-II aminoacyl-tRNA synthetase family. As to quaternary structure, tetramer of two alpha and two beta subunits.

Its subcellular location is the cytoplasm. The enzyme catalyses tRNA(Gly) + glycine + ATP = glycyl-tRNA(Gly) + AMP + diphosphate. This chain is Glycine--tRNA ligase alpha subunit, found in Glaesserella parasuis serovar 5 (strain SH0165) (Haemophilus parasuis).